The sequence spans 783 residues: DNA polymerase II (783 aa).

The protein belongs to the DNA polymerase type-B family.

It catalyses the reaction DNA(n) + a 2'-deoxyribonucleoside 5'-triphosphate = DNA(n+1) + diphosphate. With respect to regulation, DNA polymerase II activity is regulated by the lexA gene during the SOS response. In terms of biological role, thought to be involved in DNA repair and/or mutagenesis. Its processivity is enhanced by the beta sliding clamp (dnaN) and clamp loader. This Escherichia coli (strain K12) protein is DNA polymerase II (polB).